The primary structure comprises 396 residues: Phosphoglycerate kinase (396 aa).

Substrate-binding positions include 20–22 (DIN), arginine 35, 58–61 (HQGR), arginine 115, and arginine 155. Residues glutamate 328 and 353-356 (GGDT) each bind ATP.

The protein belongs to the phosphoglycerate kinase family. Monomer.

The protein localises to the cytoplasm. It catalyses the reaction (2R)-3-phosphoglycerate + ATP = (2R)-3-phospho-glyceroyl phosphate + ADP. It functions in the pathway carbohydrate degradation; glycolysis; pyruvate from D-glyceraldehyde 3-phosphate: step 2/5. The polypeptide is Phosphoglycerate kinase (Natronomonas pharaonis (strain ATCC 35678 / DSM 2160 / CIP 103997 / JCM 8858 / NBRC 14720 / NCIMB 2260 / Gabara) (Halobacterium pharaonis)).